The chain runs to 52 residues: Ribosome biogenesis protein Nop10 (52 aa).

It belongs to the NOP10 family.

Involved in ribosome biogenesis; more specifically in 18S rRNA pseudouridylation and in cleavage of pre-rRNA. This chain is Ribosome biogenesis protein Nop10, found in Methanococcus vannielii (strain ATCC 35089 / DSM 1224 / JCM 13029 / OCM 148 / SB).